Reading from the N-terminus, the 698-residue chain is DNA ligase (698 aa).

Residues 35–39 (DSVYD), 84–85 (SL), and Glu123 contribute to the NAD(+) site. Lys125 acts as the N6-AMP-lysine intermediate in catalysis. The NAD(+) site is built by Arg146, Glu183, Lys302, and Lys326. Cys420, Cys423, Cys438, and Cys443 together coordinate Zn(2+). The region spanning 612–698 (NGKGHLNGQT…QNSADTIHLL (87 aa)) is the BRCT domain.

It belongs to the NAD-dependent DNA ligase family. LigA subfamily. Requires Mg(2+) as cofactor. The cofactor is Mn(2+).

It carries out the reaction NAD(+) + (deoxyribonucleotide)n-3'-hydroxyl + 5'-phospho-(deoxyribonucleotide)m = (deoxyribonucleotide)n+m + AMP + beta-nicotinamide D-nucleotide.. Functionally, DNA ligase that catalyzes the formation of phosphodiester linkages between 5'-phosphoryl and 3'-hydroxyl groups in double-stranded DNA using NAD as a coenzyme and as the energy source for the reaction. It is essential for DNA replication and repair of damaged DNA. The sequence is that of DNA ligase from Synechococcus sp. (strain WH7803).